The primary structure comprises 386 residues: Chaperone protein DnaJ (386 aa).

Residues 6 to 71 (DYYEILGVDR…QKRARYDQFG (66 aa)) form the J domain. The CR-type zinc finger occupies 144 to 226 (GTEKEVTVSR…CGGKGRVRKH (83 aa)). Zn(2+) contacts are provided by Cys-157, Cys-160, Cys-174, Cys-177, Cys-200, Cys-203, Cys-214, and Cys-217. 4 CXXCXGXG motif repeats span residues 157 to 164 (CPTCSGSG), 174 to 181 (CRQCNGTG), 200 to 207 (CDVCHGEG), and 214 to 221 (CETCGGKG).

Belongs to the DnaJ family. As to quaternary structure, homodimer. The cofactor is Zn(2+).

It is found in the cytoplasm. Participates actively in the response to hyperosmotic and heat shock by preventing the aggregation of stress-denatured proteins and by disaggregating proteins, also in an autonomous, DnaK-independent fashion. Unfolded proteins bind initially to DnaJ; upon interaction with the DnaJ-bound protein, DnaK hydrolyzes its bound ATP, resulting in the formation of a stable complex. GrpE releases ADP from DnaK; ATP binding to DnaK triggers the release of the substrate protein, thus completing the reaction cycle. Several rounds of ATP-dependent interactions between DnaJ, DnaK and GrpE are required for fully efficient folding. Also involved, together with DnaK and GrpE, in the DNA replication of plasmids through activation of initiation proteins. This chain is Chaperone protein DnaJ, found in Acetivibrio thermocellus (strain ATCC 27405 / DSM 1237 / JCM 9322 / NBRC 103400 / NCIMB 10682 / NRRL B-4536 / VPI 7372) (Clostridium thermocellum).